Here is a 394-residue protein sequence, read N- to C-terminus: Nuclear hormone receptor family member nhr-18 (394 aa).

The nuclear receptor DNA-binding region spans 8–83 (SGSCEVCGDK…VGMDTRRFQT (76 aa)). 2 consecutive NR C4-type zinc fingers follow at residues 11-31 (CEVCGDKTSGRHFGVMSCRAC) and 48-71 (CPNGTCHTSVNGKFNCKQCRLKKC). The NR LBD domain occupies 134–394 (MLQKPTNHVL…FSHPEMFEAT (261 aa)).

Belongs to the nuclear hormone receptor family.

The protein localises to the nucleus. Functionally, orphan nuclear receptor. The chain is Nuclear hormone receptor family member nhr-18 (nhr-18) from Caenorhabditis elegans.